The following is a 108-amino-acid chain: Replication restart protein PriB (108 aa).

The 101-residue stretch at 8 to 108 folds into the SSB domain; it reads VDNRFSLIGK…LHAEQIEFIE (101 aa).

It belongs to the PriB family. Homodimer. Interacts with PriA and DnaT. Component of the replication restart primosome. Primosome assembly occurs via a 'hand-off' mechanism. PriA binds to replication forks, subsequently PriB then DnaT bind; DnaT then displaces ssDNA to generate the helicase loading substrate.

Its function is as follows. Involved in the restart of stalled replication forks, which reloads the replicative helicase on sites other than the origin of replication; the PriA-PriB pathway is the major replication restart pathway. During primosome assembly it facilitates complex formation between PriA and DnaT on DNA; stabilizes PriA on DNA. Stimulates the DNA unwinding activity of PriA helicase. This Histophilus somni (strain 2336) (Haemophilus somnus) protein is Replication restart protein PriB.